The sequence spans 219 residues: Probable nicotinate-nucleotide adenylyltransferase (219 aa).

It belongs to the NadD family.

The enzyme catalyses nicotinate beta-D-ribonucleotide + ATP + H(+) = deamido-NAD(+) + diphosphate. Its pathway is cofactor biosynthesis; NAD(+) biosynthesis; deamido-NAD(+) from nicotinate D-ribonucleotide: step 1/1. Its function is as follows. Catalyzes the reversible adenylation of nicotinate mononucleotide (NaMN) to nicotinic acid adenine dinucleotide (NaAD). The polypeptide is Probable nicotinate-nucleotide adenylyltransferase (Erythrobacter litoralis (strain HTCC2594)).